We begin with the raw amino-acid sequence, 1420 residues long: DNA-directed RNA polymerase subunit beta' (1420 aa).

Zn(2+) is bound by residues Cys70, Cys72, Cys85, and Cys88. Asp464, Asp466, and Asp468 together coordinate Mg(2+). Cys823, Cys897, Cys904, and Cys907 together coordinate Zn(2+).

The protein belongs to the RNA polymerase beta' chain family. The RNAP catalytic core consists of 2 alpha, 1 beta, 1 beta' and 1 omega subunit. When a sigma factor is associated with the core the holoenzyme is formed, which can initiate transcription. It depends on Mg(2+) as a cofactor. Zn(2+) serves as cofactor.

It carries out the reaction RNA(n) + a ribonucleoside 5'-triphosphate = RNA(n+1) + diphosphate. Its function is as follows. DNA-dependent RNA polymerase catalyzes the transcription of DNA into RNA using the four ribonucleoside triphosphates as substrates. The polypeptide is DNA-directed RNA polymerase subunit beta' (Polynucleobacter necessarius subsp. necessarius (strain STIR1)).